The following is a 37-amino-acid chain: Potassium channel toxin alpha-KTx 15.3 (37 aa).

At Q1 the chain carries Pyrrolidone carboxylic acid. 3 disulfides stabilise this stretch: C8–C28, C13–C33, and C17–C35.

As to expression, expressed by the venom gland.

The protein resides in the secreted. Inhibits A-type (Kv4) voltage-gated potassium channels of striated neurons (Ki=131 nM), probably by acting as a pore blocker. Has also been shown to block ERG1/Kv11.1/KCNH2 potassium channels (IC(50)=7.9 uM). The presence of the Kv4-associated proteins DPP6 or DPP10 is mandatory to have high-affinity blockade of Kv4.2/KCND2 and Kv4.3/KCND3 channels (80-90% inhibition at 500 nM of toxin). In contrast, the presence of the Kv4-associated protein KChIP1/KCNIP1 does not enhance the affinity blockade (only 40% inhibition at 500 nM). In adult rat brain, the toxin binds to sites in the striatum, and cerebellum. It shares the same target in rat brain than AaTX1 (AC Q867F4) and BmTX3 (AC Q8I0L5). In DPP6 knockout mice, A-type currents are about 20-fold less affected by the toxin. In rodent models of Parkinson's disease, the toxin reduces motor symptoms and emotional and cognitive symptoms. The chain is Potassium channel toxin alpha-KTx 15.3 from Androctonus mauritanicus mauritanicus (Scorpion).